The sequence spans 467 residues: Uronate isomerase (467 aa).

The protein belongs to the metallo-dependent hydrolases superfamily. Uronate isomerase family.

The catalysed reaction is D-glucuronate = D-fructuronate. The enzyme catalyses aldehydo-D-galacturonate = keto-D-tagaturonate. Its pathway is carbohydrate metabolism; pentose and glucuronate interconversion. This Haemophilus influenzae (strain 86-028NP) protein is Uronate isomerase.